A 197-amino-acid chain; its full sequence is MKKIGLFGGTFDPIHNGHLHIARAFADEIGLDAVVFLPAGGPYHKDAASASAADRLAMVELATAEDARFAVSDCDIVREGATYTFDTVQIFRQQFPSAQLWWLMGSDSLMKLHTWKKWQMLVRETNIAVAMRQGDSLHQTPRELHAWLGNALQDGSIRILSAPMHNASSTEIRRAGVSDGIPPAAARYIREHGLYEK.

Belongs to the NadD family.

It carries out the reaction nicotinate beta-D-ribonucleotide + ATP + H(+) = deamido-NAD(+) + diphosphate. It participates in cofactor biosynthesis; NAD(+) biosynthesis; deamido-NAD(+) from nicotinate D-ribonucleotide: step 1/1. Catalyzes the reversible adenylation of nicotinate mononucleotide (NaMN) to nicotinic acid adenine dinucleotide (NaAD). This is Probable nicotinate-nucleotide adenylyltransferase from Neisseria meningitidis serogroup C (strain 053442).